A 306-amino-acid polypeptide reads, in one-letter code: MVTAKMVKELRERTGAGMMDCKKALTETDGDMEKAVEFLREKGLAAAAKKAGRVAAEGLVTTYLSEDNKTAVALEVNCETDFVSINESFVEFTNSIAKQIATSDVKDVEELLESKYIADENVTVKEALTALIAKIGENMNIRRFEKLTIDNGVINGYVHGEGRIGVLVELGCEKESDILMPLAKDIAMQVAAANPLFLDETSVDEEALDKEREIYRAQALNEGKPEKIVEKMVEGRVKKYLKEVCLIDQVWVKNSDYTIKKLLEEKSKEVGSPITLCKFVRFERGEGLEKKEENFAEEVQRQMNQK.

Residues 80 to 83 (TDFV) are involved in Mg(2+) ion dislocation from EF-Tu.

The protein belongs to the EF-Ts family.

It is found in the cytoplasm. In terms of biological role, associates with the EF-Tu.GDP complex and induces the exchange of GDP to GTP. It remains bound to the aminoacyl-tRNA.EF-Tu.GTP complex up to the GTP hydrolysis stage on the ribosome. The polypeptide is Elongation factor Ts (Clostridium novyi (strain NT)).